A 2222-amino-acid chain; its full sequence is Voltage-dependent R-type calcium channel subunit alpha-1E (2222 aa).

Residues 1–40 are Cytoplasmic-facing; the sequence is MALYNPIPVRQNCFTVNRSLFIFGEDNIVRKYAKKLIDWP. Residues 27–305 form an I repeat; it reads NIVRKYAKKL…LVLGVLSGEF (279 aa). Residues 41-59 form a helical membrane-spanning segment; it reads PFEYMILATIIANCIVLAL. Over 60-78 the chain is Extracellular; that stretch reads EQHLPEDDKTPMSRRLEKT. A helical transmembrane segment spans residues 79–97; that stretch reads EPYFIGIFCFEAGIKIVAL. Residues 98 to 109 are Cytoplasmic-facing; the sequence is GFIFHKGSYLRN. Residues 110 to 124 form a helical membrane-spanning segment; sequence GWNVMDFIVVLSGIL. The Extracellular portion of the chain corresponds to 125–136; it reads ATAGTHFNTHVD. The chain crosses the membrane as a helical span at residues 137–156; sequence LRTLRAVRVLRPLKLVSGIP. Residues 157 to 174 lie on the Cytoplasmic side of the membrane; the sequence is SLQIVLKSIMKAMVPLLQ. Residues 175-195 form a helical membrane-spanning segment; that stretch reads IGLLLFFAILMFAIIGLEFYS. Residues 196–277 lie on the Extracellular side of the membrane; the sequence is GKLHRACFMN…NTNDALGATW (82 aa). N205 carries N-linked (GlcNAc...) asparagine glycosylation. A helical transmembrane segment spans residues 278 to 301; sequence NWLYFIPLIIIGSFFVLNLVLGVL. The Cytoplasmic segment spans residues 302-427; sequence SGEFAKERER…ISIRHMVKSQ (126 aa). Residues 325-342 form a binding to the beta subunit region; sequence QQIERELNGYRAWIDKAE. Ca(2+) is bound at residue D377. At S378 the chain carries Phosphoserine. The Ca(2+) site is built by S379, E381, and C383. T391 carries the phosphothreonine modification. The II repeat unit spans residues 413 to 657; it reads ERLLRISIRH…VFLAIAVDNL (245 aa). The helical transmembrane segment at 428–447 threads the bilayer; the sequence is VFYWIVLSVVALNTACVAIV. The Extracellular portion of the chain corresponds to 448–460; it reads HHNQPQWLTHLLY. A helical membrane pass occupies residues 461–480; that stretch reads YAEFLFLGLFLLEMSLKMYG. The Cytoplasmic segment spans residues 481-489; it reads MGPRLYFHS. The helical transmembrane segment at 490–508 threads the bilayer; sequence SFNCFDFGVTVGSIFEVVW. Topologically, residues 509–518 are extracellular; the sequence is AIFRPGTSFG. A helical membrane pass occupies residues 519–537; that stretch reads ISVLRALRLLRIFKITKYW. Over 538–556 the chain is Cytoplasmic; that stretch reads ASLRNLVVSLMSSMKSIIS. The helical transmembrane segment at 557–576 threads the bilayer; the sequence is LLFLLFLFIVVFALLGMQLF. The Extracellular segment spans residues 577–629; it reads GGRFNFNDGTPSANFDTFPAAIMTVFQILTGEDWNEVMYNGIRSQGGVSSGMW. A helical transmembrane segment spans residues 630–654; the sequence is SAIYFIVLTLFGNYTLLNVFLAIAV. Over 655-1100 the chain is Cytoplasmic; that stretch reads DNLANAQELT…TNPIRKACHY (446 aa). Residues 680-727 form a disordered region; the sequence is LQKAKEVSPMSAPNMPSIERDRRRRHHMSMWEPRSSHLRERRRRHHMS. Residues S687, S696, S744, S766, and S806 each carry the phosphoserine modification. Disordered regions lie at residues 820 to 944 and 1042 to 1076; these read NQRS…VPRG and NKTD…RETG. The span at 864-877 shows a compositional bias: basic residues; that stretch reads RHRQSQRRSRHRRV. Positions 884 to 896 are enriched in low complexity; it reads SASASRSRSASQE. A Phosphoserine modification is found at S898. 2 stretches are compositionally biased toward basic and acidic residues: residues 906-935 and 1044-1055; these read DGEK…DLRR and TDGEASPLKEAE. S1049 carries the phosphoserine modification. The stretch at 1092 to 1378 is one III repeat; sequence NPIRKACHYI…IFVALIIITF (287 aa). A helical membrane pass occupies residues 1101-1117; sequence IVNLRYFEMCILLVIAA. Residues 1118 to 1141 lie on the Extracellular side of the membrane; the sequence is SSIALAAEDPVLTNSERNKVLRYF. Residues 1142–1161 traverse the membrane as a helical segment; it reads DYVFTGVFTFEMVIKMIDQG. Over 1162-1169 the chain is Cytoplasmic; it reads LILQDGSY. A helical membrane pass occupies residues 1170 to 1192; sequence FRDLWNILDFVVVVGALVAFALA. Topologically, residues 1193–1206 are extracellular; it reads NALGTNKGRDIKTI. Residues 1207 to 1224 traverse the membrane as a helical segment; the sequence is KSLRVLRVLRPLKTIKRL. The Cytoplasmic segment spans residues 1225–1243; it reads PKLKAVFDCVVTSLKNVFN. A helical membrane pass occupies residues 1244-1263; sequence ILIVYKLFMFIFAVIAVQLF. Topologically, residues 1264–1350 are extracellular; sequence KGKFFYCTDS…RGPSRSNRME (87 aa). Residues 1351 to 1374 form a helical membrane-spanning segment; that stretch reads MSIFYVVYFVVFPFFFVNIFVALI. At 1375-1431 the chain is on the cytoplasmic side; sequence IITFQEQGDKMMEECSLEKNERACIDFAISAKPLTRYMPQNRHTFQYRVWHFVVSPS. An IV repeat occupies 1415 to 1678; the sequence is NRHTFQYRVW…LFVAVIMDNF (264 aa). A helical membrane pass occupies residues 1432–1450; it reads FEYTIMAMIALNTVVLMMK. Topologically, residues 1451–1467 are extracellular; sequence YYSAPWTYELALKYLNI. Residues 1468–1485 form a helical membrane-spanning segment; the sequence is AFTMVFSLECVLKVIAFG. The Cytoplasmic segment spans residues 1486–1493; sequence FLNYFRDT. The helical transmembrane segment at 1494 to 1512 threads the bilayer; that stretch reads WNIFDFITVIGSITEIILT. At 1513-1523 the chain is on the extracellular side; it reads DSKLVNTSGFN. Residues N1518 and N1523 are each glycosylated (N-linked (GlcNAc...) asparagine). Residues 1524–1542 traverse the membrane as a helical segment; the sequence is MSFLKLFRAARLIKLLRQG. The Cytoplasmic portion of the chain corresponds to 1543–1561; sequence YTIRILLWTFVQSFKALPY. The chain crosses the membrane as a helical span at residues 1562–1581; sequence VCLLIAMLFFIYAIIGMQVF. Topologically, residues 1582-1650 are extracellular; that stretch reads GNIKLDEESH…NESERCGTDL (69 aa). An N-linked (GlcNAc...) asparagine glycan is attached at N1641. The chain crosses the membrane as a helical span at residues 1651–1676; that stretch reads AYVYFVSFIFFCSFLMLNLFVAVIMD. Residues 1677–2222 lie on the Cytoplasmic side of the membrane; sequence NFEYLTRDSS…LSDTEEDDKC (546 aa). The 36-residue stretch at 1691 to 1726 folds into the EF-hand domain; the sequence is HHLDEFVRVWAEYDRAACGRIHYTEMYEMLTLMSPP. Ca(2+)-binding residues include D1704, R1710, and E1715. The disordered stretch occupies residues 1970-2135; it reads SAHRLNSDSG…QQGQHPSPQH (166 aa). Over residues 1974–1994 the composition is skewed to basic and acidic residues; the sequence is LNSDSGHKSDTHRSGGRERGR. Phosphoserine is present on residues S2003 and S2022. Residues 2010-2027 are compositionally biased toward basic and acidic residues; sequence NSEERGTQADWESPERRQ. Residues 2046 to 2061 are compositionally biased toward low complexity; the sequence is SLSESSIPSISDTSTP. Polar residues predominate over residues 2104-2123; it reads LASQALESNSACLTESSNSL. Positions 2124–2135 are enriched in low complexity; the sequence is HPQQGQHPSPQH.

It belongs to the calcium channel alpha-1 subunit (TC 1.A.1.11) family. CACNA1E subfamily. As to quaternary structure, interacts with EFHC1. Voltage-dependent calcium channels are multisubunit complexes, consisting of alpha-1, alpha-2, beta and delta subunits in a 1:1:1:1 ratio. The channel activity is directed by the pore-forming and voltage-sensitive alpha-1 subunit. In many cases, this subunit is sufficient to generate voltage-sensitive calcium channel activity. The auxiliary subunits beta and alpha-2/delta linked by a disulfide bridge regulate the channel activity. Expressed in central nervous system and in insulinoma.

It is found in the membrane. It catalyses the reaction Ca(2+)(in) = Ca(2+)(out). Its function is as follows. Voltage-sensitive calcium channels (VSCC) mediate the entry of calcium ions into excitable cells and are also involved in a variety of calcium-dependent processes, including muscle contraction, hormone or neurotransmitter release, gene expression, cell motility, cell division and cell death. The isoform alpha-1E gives rise to R-type calcium currents. R-type calcium channels belong to the 'high-voltage activated' (HVA) group and are blocked by nickel. They are however insensitive to dihydropyridines (DHP). Calcium channels containing alpha-1E subunit could be involved in the modulation of firing patterns of neurons which is important for information processing. The sequence is that of Voltage-dependent R-type calcium channel subunit alpha-1E (Cacna1e) from Rattus norvegicus (Rat).